Consider the following 622-residue polypeptide: Apical membrane antigen 1 (622 aa).

The N-terminal stretch at 1 to 24 is a signal peptide; sequence MRKLYCVLLLSAFEFTYMINFGRG. Over 25–546 the chain is Extracellular; sequence QNYWEHPYQK…EHKPTYDKMK (522 aa). 5 disulfide bridges follow: cysteine 149–cysteine 302, cysteine 217–cysteine 247, cysteine 263–cysteine 275, cysteine 320–cysteine 418, and cysteine 337–cysteine 409. A glycan (N-linked (GlcNAc...) asparagine) is linked at asparagine 162. N-linked (GlcNAc...) asparagine glycosylation is found at asparagine 286, asparagine 371, asparagine 421, asparagine 422, and asparagine 499. Cystine bridges form between cysteine 443–cysteine 502, cysteine 490–cysteine 507, and cysteine 492–cysteine 509. Residues 547–567 form a helical membrane-spanning segment; sequence IIIASSAAVAVLATILMVYLY. Residues 568–622 are Cytoplasmic-facing; sequence KRKGNAEKYDKMDEPQHYGKSNSRNDEMLDPEASFWGEEKRASHTTPVLMEKPYY. Basic and acidic residues predominate over residues 578 to 594; sequence KMDEPQHYGKSNSRNDE. Residues 578 to 607 are disordered; that stretch reads KMDEPQHYGKSNSRNDEMLDPEASFWGEEK.

It belongs to the apicomplexan parasites AMA1 family.

The protein localises to the membrane. Functionally, involved in parasite invasion of erythrocytes. In Plasmodium falciparum (isolate FC27 / Papua New Guinea), this protein is Apical membrane antigen 1 (AMA-1).